A 472-amino-acid polypeptide reads, in one-letter code: Replicative helicase loading/DNA remodeling protein DnaB (472 aa).

A DDBH1 region spans residues 1-112; sequence MADYWKDVLP…ERLFIYELLP (112 aa). Positions 210 to 302 are DDBH2-1; it reads DLFLAGLSET…VHLREGEQPA (93 aa). The DDBH2-2 stretch occupies residues 303–411; the sequence is EEDSLDGKLI…RQYLEWAEGK (109 aa). The tract at residues 415–472 is disordered; that stretch reads SKRNQKVIREEKLPDWMTEKETASDSESGQQKLHPQDLEEQKKKMMEEMQKLKKYSAY. Composition is skewed to basic and acidic residues over residues 421-437 and 448-465; these read VIREEKLPDWMTEKETA and HPQDLEEQKKKMMEEMQK.

This sequence belongs to the DnaB/DnaD family. Homotetramer. Also forms higher-order oligomers, can be induced by some ssDNA. The DNA replisome assembles sequentially on oriC in this order; DnaA, DnaD, DnaB, DnaI-DnaC helicase. In atomic force microscopy forms a square with a small central hole. Part of the replication restart primosome which assembles in this order; PriA, DnaD then DnaB. The preferred DNA substrate mimics an arrested DNA replication fork with unreplicated lagging strand. Interacts with DnaC, but probably not as a tetramer. Interacts with DnaD but no interaction with PriA was seen. Interacts with cell cycle regulator CcrZ. Post-translationally, in early growth phase only full-length protein is detected, during late growth and stationary phase full-length and C-terminally truncated proteins are seen (at protein level). Truncated protein is only seen in cytoplasmic fractions.

Its subcellular location is the cytoplasm. It is found in the cell membrane. Functionally, helps DnaI load the DnaC replicative helicase onto single-stranded (ss)DNA. During DNA replication from the origin of replication (oriC) in the DNA replisome, DnaD is required after DnaA, before DnaB and before subsequent helicase DnaC loading. Component of the replication restart primosome, which reloads the replicative helicase on sites other than oriC. DnaB, DnaD and DnaI may also be required for a PriA-independent pathway of replication fork restart. DnaB and DnaD work together to allow DnaB access to ssDNA. DNA replication at oriC might originate on the inner face of the cell membrane; DnaB is essential for both replication initiation and cell membrane attachment of the origin region of the chromosome and plasmids. Weakly binds ssDNA, preferentially binds double-stranded (ds)DNA, and replication fork-like substrates. Remodels DNA, laterally compacts supercoiled plasmid and linear DNA, forms beads along the dsDNA. Together DnaB and DnaD form bipolar complexes on plasmid DNA. DnaB and DnaD are also required to load helicase on the repN plasmid origin of replication (oriN). This is Replicative helicase loading/DNA remodeling protein DnaB from Bacillus subtilis (strain 168).